We begin with the raw amino-acid sequence, 481 residues long: Probable zeta-carotene desaturase (481 aa).

It belongs to the zeta carotene desaturase family. Decylplastoquinone serves as cofactor. Requires 6-decylubiquinone as cofactor.

It catalyses the reaction 9,9'-di-cis-zeta-carotene + 2 a quinone = 7,7',9,9'-tetra-cis-lycopene + 2 a quinol. The protein operates within carotenoid biosynthesis; lycopene biosynthesis. Catalyzes the conversion of zeta-carotene to lycopene via the intermediary of neurosporene. It carries out two consecutive desaturations (introduction of double bonds) at positions C-7 and C-7'. The protein is Probable zeta-carotene desaturase (zds) of Synechococcus elongatus (strain ATCC 33912 / PCC 7942 / FACHB-805) (Anacystis nidulans R2).